A 160-amino-acid chain; its full sequence is Cytochrome b6-f complex subunit 4 (160 aa).

A run of 3 helical transmembrane segments spans residues 36–56 (LLYM…GLSV), 95–115 (LLGV…PFIE), and 131–151 (ILFL…TFPI).

The protein belongs to the cytochrome b family. PetD subfamily. The 4 large subunits of the cytochrome b6-f complex are cytochrome b6, subunit IV (17 kDa polypeptide, petD), cytochrome f and the Rieske protein, while the 4 small subunits are petG, petL, petM and petN. The complex functions as a dimer. Post-translationally, the N-terminus is blocked.

Its subcellular location is the plastid. It is found in the chloroplast thylakoid membrane. Component of the cytochrome b6-f complex, which mediates electron transfer between photosystem II (PSII) and photosystem I (PSI), cyclic electron flow around PSI, and state transitions. In Chlamydomonas reinhardtii (Chlamydomonas smithii), this protein is Cytochrome b6-f complex subunit 4.